A 550-amino-acid chain; its full sequence is Membrane-bound alkaline phosphatase (550 aa).

Positions 1 to 39 are cleaved as a signal peptide; sequence MSTWWLVVVAAAAAAGLVRAEDRYHPERLAAGEASAATR. Asp83 contributes to the Mg(2+) binding site. Asp83 provides a ligand contact to Zn(2+). Ser133 acts as the Phosphoserine intermediate in catalysis. Residues His196, Ser198, and Glu356 each coordinate Mg(2+). 5 residues coordinate Zn(2+): Asp361, His365, Asp402, His403, and His479. The GPI-anchor amidated serine moiety is linked to residue Ser524. The propeptide at 525 to 550 is removed in mature form; sequence AATVPTAALLSLLLAAFITLRHQCFL.

It belongs to the alkaline phosphatase family. Mg(2+) serves as cofactor. Requires Zn(2+) as cofactor. Midgut.

The protein resides in the cell membrane. It catalyses the reaction a phosphate monoester + H2O = an alcohol + phosphate. The protein is Membrane-bound alkaline phosphatase (Alp-m) of Bombyx mori (Silk moth).